We begin with the raw amino-acid sequence, 390 residues long: MKFVDEAVVKVQAGDGGSGVVSFWREKFITKGGPDGGDGGDGGDVYIQADENLNTLIDYRFQRFYEAERGENGRGGNCTGKRGKDIVLRVPVGTRAVDIHTNEIVAEVAEHGKKVMVAKGGWHGLGNTRFKSSVNRAPRQRTLGTKGEIREIRLELLLLADVGMLGLPNAGKSTFIRAVSAAKPKVADYPFTTLIPSLGVVSVVPEKSFVVADIPGLIEGAADGAGLGIRFLKHLERCRVLLHMIDIMPIDQSDPVQNALTIIDELEQYSEKLASKPRWLVFNKVDLMPEEEANEKIQEILDALGWEDEYFKISAINRSGTKELCYKLADFMENLPREEEEVAEEDKVNFMWDDYHKDAMAGKDVVTEDDDDWDDWDDEEDDGHVVYVRD.

The Obg domain maps to 1-159 (MKFVDEAVVK…REIRLELLLL (159 aa)). Residues 160 to 333 (ADVGMLGLPN…LCYKLADFME (174 aa)) form the OBG-type G domain. Residues 166 to 173 (GLPNAGKS), 191 to 195 (FTTLI), 213 to 216 (DIPG), 283 to 286 (NKVD), and 314 to 316 (SAI) each bind GTP. Residues serine 173 and threonine 193 each coordinate Mg(2+). A compositionally biased stretch (acidic residues) spans 367–382 (TEDDDDWDDWDDEEDD). Positions 367-390 (TEDDDDWDDWDDEEDDGHVVYVRD) are disordered.

Belongs to the TRAFAC class OBG-HflX-like GTPase superfamily. OBG GTPase family. In terms of assembly, monomer. It depends on Mg(2+) as a cofactor.

The protein localises to the cytoplasm. Functionally, an essential GTPase which binds GTP, GDP and possibly (p)ppGpp with moderate affinity, with high nucleotide exchange rates and a fairly low GTP hydrolysis rate. Plays a role in control of the cell cycle, stress response, ribosome biogenesis and in those bacteria that undergo differentiation, in morphogenesis control. This chain is GTPase Obg, found in Vibrio parahaemolyticus serotype O3:K6 (strain RIMD 2210633).